The primary structure comprises 238 residues: Protein LicA homolog (238 aa).

This sequence belongs to the peptidase S49 family.

The protein is Protein LicA homolog (licA) of Mycoplasma capricolum subsp. capricolum (strain California kid / ATCC 27343 / NCTC 10154).